A 324-amino-acid chain; its full sequence is Probable pectinesterase A (324 aa).

An N-terminal signal peptide occupies residues 1–19 (MHLPSLVLGLLGLGLTASA). A glycan (N-linked (GlcNAc...) asparagine) is linked at Asn27. A substrate-binding site is contributed by Gln142. Residue Asp165 is the Proton donor of the active site. Catalysis depends on Asp186, which acts as the Nucleophile. N-linked (GlcNAc...) asparagine glycosylation occurs at Asn191. Arg246 and Trp248 together coordinate substrate.

The protein belongs to the pectinesterase family.

The protein resides in the secreted. The catalysed reaction is [(1-&gt;4)-alpha-D-galacturonosyl methyl ester](n) + n H2O = [(1-&gt;4)-alpha-D-galacturonosyl](n) + n methanol + n H(+). The protein operates within glycan metabolism; pectin degradation; 2-dehydro-3-deoxy-D-gluconate from pectin: step 1/5. Involved in maceration and soft-rotting of plant tissue. In Neosartorya fischeri (strain ATCC 1020 / DSM 3700 / CBS 544.65 / FGSC A1164 / JCM 1740 / NRRL 181 / WB 181) (Aspergillus fischerianus), this protein is Probable pectinesterase A (pmeA).